The following is a 75-amino-acid chain: Exodeoxyribonuclease 7 small subunit (75 aa).

Belongs to the XseB family. As to quaternary structure, heterooligomer composed of large and small subunits.

It localises to the cytoplasm. The enzyme catalyses Exonucleolytic cleavage in either 5'- to 3'- or 3'- to 5'-direction to yield nucleoside 5'-phosphates.. Functionally, bidirectionally degrades single-stranded DNA into large acid-insoluble oligonucleotides, which are then degraded further into small acid-soluble oligonucleotides. In Listeria innocua serovar 6a (strain ATCC BAA-680 / CLIP 11262), this protein is Exodeoxyribonuclease 7 small subunit.